Consider the following 181-residue polypeptide: uncharacterized protein (181 aa).

It to M.jannaschii MJ1106.

This is an uncharacterized protein from Methanothermobacter thermautotrophicus (strain ATCC 29096 / DSM 1053 / JCM 10044 / NBRC 100330 / Delta H) (Methanobacterium thermoautotrophicum).